We begin with the raw amino-acid sequence, 408 residues long: Serine/threonine transporter SstT (408 aa).

The next 9 membrane-spanning stretches (helical) occupy residues 19–39, 48–68, 86–106, 143–163, 193–213, 223–243, 294–314, 322–342, and 367–387; these read SLVS…VISP, LGSL…LVLV, IVGL…LLSF, VTAV…GLGF, FAPL…GFSA, VLLS…VFII, IPLG…VLTL, IEVS…SACG, and VAMQ…SAET.

This sequence belongs to the dicarboxylate/amino acid:cation symporter (DAACS) (TC 2.A.23) family.

The protein localises to the cell inner membrane. The enzyme catalyses L-serine(in) + Na(+)(in) = L-serine(out) + Na(+)(out). It carries out the reaction L-threonine(in) + Na(+)(in) = L-threonine(out) + Na(+)(out). Its function is as follows. Involved in the import of serine and threonine into the cell, with the concomitant import of sodium (symport system). This chain is Serine/threonine transporter SstT, found in Colwellia psychrerythraea (strain 34H / ATCC BAA-681) (Vibrio psychroerythus).